A 162-amino-acid chain; its full sequence is Large ribosomal subunit protein uL15 (162 aa).

The disordered stretch occupies residues 1 to 44 (MKLNELRDNPGATKNRIRVGRGIGSGKGKTAGRGVKGQKSREGV). Over residues 21–35 (RGIGSGKGKTAGRGV) the composition is skewed to gly residues.

It belongs to the universal ribosomal protein uL15 family. In terms of assembly, part of the 50S ribosomal subunit.

Binds to the 23S rRNA. In Rhodospirillum rubrum (strain ATCC 11170 / ATH 1.1.1 / DSM 467 / LMG 4362 / NCIMB 8255 / S1), this protein is Large ribosomal subunit protein uL15.